A 99-amino-acid polypeptide reads, in one-letter code: NADH dehydrogenase [ubiquinone] 1 alpha subcomplex subunit 2 (99 aa).

Ala2 carries the post-translational modification N-acetylalanine. Residues Cys24 and Cys58 are joined by a disulfide bond. Lys64 carries the post-translational modification N6-acetyllysine; alternate. Position 64 is an N6-succinyllysine; alternate (Lys64). Lys75 carries the post-translational modification N6-acetyllysine.

Belongs to the complex I NDUFA2 subunit family. Complex I is composed of 45 different subunits.

Its subcellular location is the mitochondrion inner membrane. Functionally, accessory subunit of the mitochondrial membrane respiratory chain NADH dehydrogenase (Complex I), that is believed not to be involved in catalysis. Complex I functions in the transfer of electrons from NADH to the respiratory chain. The immediate electron acceptor for the enzyme is believed to be ubiquinone. This Bos taurus (Bovine) protein is NADH dehydrogenase [ubiquinone] 1 alpha subcomplex subunit 2 (NDUFA2).